We begin with the raw amino-acid sequence, 214 residues long: 3-isopropylmalate dehydratase small subunit (214 aa).

It belongs to the LeuD family. LeuD type 1 subfamily. In terms of assembly, heterodimer of LeuC and LeuD.

The enzyme catalyses (2R,3S)-3-isopropylmalate = (2S)-2-isopropylmalate. The protein operates within amino-acid biosynthesis; L-leucine biosynthesis; L-leucine from 3-methyl-2-oxobutanoate: step 2/4. Catalyzes the isomerization between 2-isopropylmalate and 3-isopropylmalate, via the formation of 2-isopropylmaleate. In Alcanivorax borkumensis (strain ATCC 700651 / DSM 11573 / NCIMB 13689 / SK2), this protein is 3-isopropylmalate dehydratase small subunit.